A 351-amino-acid polypeptide reads, in one-letter code: Trans-enoyl reductase grgB (351 aa).

One can recognise an Enoyl reductase (ER) domain in the interval 10-346 (GAESGGYRLA…GKVHAKKLVV (337 aa)). NADP(+)-binding positions include 161–164 (ATAT), 184–187 (SPAN), Tyr202, 249–250 (LE), and 339–340 (VH).

Belongs to the zinc-containing alcohol dehydrogenase family.

It functions in the pathway secondary metabolite biosynthesis. Trans-enoyl reductase; part of the gene cluster that mediates the biosynthesis of gregatin A, a fungal polyketide featuring an alkylated furanone core. The PKS grgA synthesizes C11 and C4 polyketide chains in the presence and absence of the trans-enoyl reductase grgB, respectively. The polyketide transferase grgF is then responsible for the fusion of the two carbon chains to produce the furanone skeleton of gregatin A. Next, the cytochrome P450 monooxygenase grgG accepts performs the oxidative cyclization to furnish the gregatin scaffold and leads to the formation of desmethylgregatin A. Finally, the O-methyltransferase grgD methylates the carboxyl group of desmethylgregatin A to provide gregatin A. The protein is Trans-enoyl reductase grgB of Penicillium sp.